The chain runs to 278 residues: MANYTAADVKRLRELTGAGMMACKKALEESGGDFDKAIEALRIKGAKDVGKRAERTAANGLIALAQDGDTSAVLLELNCETDFVAKNDKFQELAAELAGFVARTSPSDVPSLLSADYADGKTVSQVIEELSAVIGEKIELRRFAKVEGAYVASYMHKSDPDLPPTLGVLVELDKPNAEVAKDLAQQIAALAPKYISRDDVPADVVENERRIAKATAREEGKPEQALPKIVEGRLNGFFKDATLLGQPFVKDNKKTIQQVVDEAGVTVRRFVRFKVGQA.

The segment at 81-84 (TDFV) is involved in Mg(2+) ion dislocation from EF-Tu.

The protein belongs to the EF-Ts family.

It is found in the cytoplasm. Functionally, associates with the EF-Tu.GDP complex and induces the exchange of GDP to GTP. It remains bound to the aminoacyl-tRNA.EF-Tu.GTP complex up to the GTP hydrolysis stage on the ribosome. The polypeptide is Elongation factor Ts (Thermobifida fusca (strain YX)).